Here is a 189-residue protein sequence, read N- to C-terminus: HTH-type transcriptional repressor AcnR (189 aa).

Positions 10-70 (AERKVEILSG…EVAHEDMRKM (61 aa)) constitute an HTH tetR-type domain. The segment at residues 33-52 (TVARLEETIGKSRGAIFHHY) is a DNA-binding region (H-T-H motif). Citrate contacts are provided by residues 79-80 (LI), arginine 130, and glutamine 134. Glutamate 181 serves as a coordination point for Mg(2+). Position 185 (arginine 185) interacts with citrate.

In terms of assembly, homodimer.

AcnR negatively controls the expression of the aconitase gene acn. The sequence is that of HTH-type transcriptional repressor AcnR from Corynebacterium jeikeium (strain K411).